Reading from the N-terminus, the 495-residue chain is UDP-glycosyltransferase 73C10 (495 aa).

The active-site Proton acceptor is H24. Position 24 (H24) interacts with an anthocyanidin. D129 functions as the Charge relay in the catalytic mechanism. UDP-alpha-D-glucose contacts are provided by Q358, H373, W376, N377, S378, and E381. Residue G396 coordinates an anthocyanidin. The UDP-alpha-D-glucose site is built by D397 and Q398.

It belongs to the UDP-glycosyltransferase family.

It carries out the reaction oleanolate + UDP-alpha-D-glucose = oleanolate 3-O-beta-D-glucoside + UDP + H(+). Functionally, catalyzes the transfer of a glucose (Glc) moiety from UDP-Glc to the C-3 position of the oleanane sapogenins oleanolate and hederagenin, and to the C-28 carboxylic group of the lupane sapogenin betulinate. The monoglucosylated hederagenin 3-O-beta-D-glucoside is a feeding deterrent of the yellow-striped flea beetle (Phyllotreta nemorum). This chain is UDP-glycosyltransferase 73C10, found in Barbarea vulgaris (Yellow rocket).